The sequence spans 90 residues: Neurotoxin LmNaTx19 (90 aa).

The first 19 residues, 1–19, serve as a signal peptide directing secretion; that stretch reads MNHLILIVAMCLMVIGVQC. The region spanning 21-80 is the LCN-type CS-alpha/beta domain; it reads KDGYLYDDVDCKFSCWDNEYCRKLCKSKKAVGGYCWRWRFSCYCTGLPDNEKTEGTYKCG. 4 cysteine pairs are disulfide-bonded: C31-C79, C35-C55, C41-C62, and C45-C64.

It belongs to the long (4 C-C) scorpion toxin superfamily. Sodium channel inhibitor family. Alpha subfamily. In terms of tissue distribution, expressed by the venom gland.

The protein resides in the secreted. Binds voltage-independently at site-3 of voltage-gated sodium channels (Nav) and inhibits the inactivation of the activated channels, thereby blocking neuronal transmission. In Lychas mucronatus (Chinese swimming scorpion), this protein is Neurotoxin LmNaTx19.